The sequence spans 124 residues: UPF0102 protein Mmc1_3298 (124 aa).

Belongs to the UPF0102 family.

In Magnetococcus marinus (strain ATCC BAA-1437 / JCM 17883 / MC-1), this protein is UPF0102 protein Mmc1_3298.